A 101-amino-acid chain; its full sequence is ATP-dependent Clp protease adapter protein ClpS (101 aa).

Belongs to the ClpS family. In terms of assembly, binds to the N-terminal domain of the chaperone ClpA.

Its function is as follows. Involved in the modulation of the specificity of the ClpAP-mediated ATP-dependent protein degradation. This is ATP-dependent Clp protease adapter protein ClpS from Mycobacterium bovis (strain ATCC BAA-935 / AF2122/97).